A 229-amino-acid chain; its full sequence is Cytochrome c oxidase subunit 2 (229 aa).

Residues 1–26 (MATWSNLGLQDSASPLMEQLNFFHDH) lie on the Mitochondrial intermembrane side of the membrane. The helical transmembrane segment at 27–48 (TLLILIMITILVGYLMLMLFFN) threads the bilayer. Over 49 to 62 (KFTNRFLLHGQTIE) the chain is Mitochondrial matrix. A helical membrane pass occupies residues 63-82 (IIWTILPAIVLMFIALPSLR). Residues 83–229 (ILYLLDEINS…IKWITAMNSN (147 aa)) are Mitochondrial intermembrane-facing. Histidine 161, cysteine 196, glutamate 198, cysteine 200, histidine 204, and methionine 207 together coordinate Cu cation. Glutamate 198 contacts Mg(2+).

Belongs to the cytochrome c oxidase subunit 2 family. Component of the cytochrome c oxidase (complex IV, CIV), a multisubunit enzyme composed of a catalytic core of 3 subunits and several supernumerary subunits. The complex exists as a monomer or a dimer and forms supercomplexes (SCs) in the inner mitochondrial membrane with ubiquinol-cytochrome c oxidoreductase (cytochrome b-c1 complex, complex III, CIII). Cu cation is required as a cofactor.

It localises to the mitochondrion inner membrane. The catalysed reaction is 4 Fe(II)-[cytochrome c] + O2 + 8 H(+)(in) = 4 Fe(III)-[cytochrome c] + 2 H2O + 4 H(+)(out). Functionally, component of the cytochrome c oxidase, the last enzyme in the mitochondrial electron transport chain which drives oxidative phosphorylation. The respiratory chain contains 3 multisubunit complexes succinate dehydrogenase (complex II, CII), ubiquinol-cytochrome c oxidoreductase (cytochrome b-c1 complex, complex III, CIII) and cytochrome c oxidase (complex IV, CIV), that cooperate to transfer electrons derived from NADH and succinate to molecular oxygen, creating an electrochemical gradient over the inner membrane that drives transmembrane transport and the ATP synthase. Cytochrome c oxidase is the component of the respiratory chain that catalyzes the reduction of oxygen to water. Electrons originating from reduced cytochrome c in the intermembrane space (IMS) are transferred via the dinuclear copper A center (CU(A)) of subunit 2 and heme A of subunit 1 to the active site in subunit 1, a binuclear center (BNC) formed by heme A3 and copper B (CU(B)). The BNC reduces molecular oxygen to 2 water molecules using 4 electrons from cytochrome c in the IMS and 4 protons from the mitochondrial matrix. In Simulium vittatum (Striped black fly), this protein is Cytochrome c oxidase subunit 2 (COII).